Reading from the N-terminus, the 1424-residue chain is Serine/threonine-protein kinase LMTK3 (1424 aa).

A signal peptide spans 1–20 (MPAPGALILLAAVSASGCLA). Residues 40–60 (AVVLISCSGLLAFIFLLLTCL) form a helical membrane-spanning segment. A disordered region spans residues 74-95 (NPEGEDCSGEYTPPAEETSSSQ). The region spanning 133–411 (LSYLQEIGSG…SDLQLQLTYL (279 aa)) is the Protein kinase domain. ATP-binding positions include 139–147 (IGSGWFGKV) and Lys-164. Ser-232 carries the phosphoserine modification. The active-site Proton acceptor is the Asp-266. Disordered regions lie at residues 413–465 (SERP…PDDV) and 486–516 (RGAG…PFYE). The segment covering 418-439 (RPPPPPPPPRDGPFPWPWPPSH) has biased composition (pro residues). Position 490 is an omega-N-methylarginine (Arg-490). The segment covering 496 to 507 (PWQPASAPPAPH) has biased composition (pro residues). Ser-531 and Ser-535 each carry phosphoserine. Disordered stretches follow at residues 544-666 (EHGS…PLPC), 680-964 (LERG…MSPE), 976-1024 (MSPK…APET), 1041-1313 (GLEM…RKRK), and 1325-1424 (LFDQ…PVEN). The span at 571–584 (QTPSEVPQLVSETW) shows a compositional bias: polar residues. Residues 638 to 647 (AEEEEEESSP) show a composition bias toward acidic residues. Basic and acidic residues predominate over residues 700 to 713 (PPEDDSSLRAERGS). Pro residues predominate over residues 744 to 758 (RGPPPAPPPPPPPPR). The span at 759–791 (ASAEPAASPDPPSALASPGSGLSSPGPKPGDSG) shows a compositional bias: low complexity. Pro residues predominate over residues 818–841 (PRAPPEPPDPGAPRPPPDPGPLPL). The span at 935-954 (DMKEKVAENGLESPEKEERA) shows a compositional bias: basic and acidic residues. Phosphoserine is present on residues Ser-947, Ser-962, and Ser-977. A compositionally biased stretch (basic and acidic residues) spans 994 to 1004 (RNTERPPEIGP). Gly residues predominate over residues 1084-1094 (GSGGRALGGVG). Residues 1095-1105 (TAPAGGPASAV) are compositionally biased toward low complexity. The segment covering 1167–1177 (DPLKPERKGPE) has biased composition (basic and acidic residues). A compositionally biased stretch (low complexity) spans 1200–1213 (SRLSLALPPLTLTP). The segment covering 1231-1241 (AAGGEAGGAGA) has biased composition (gly residues). Acidic residues predominate over residues 1245-1261 (AEEDGEDEDEDEEDEEA). The span at 1262 to 1272 (AGSRDPGRTRE) shows a compositional bias: basic and acidic residues. Residues 1329–1339 (ETPTNELSVQG) are compositionally biased toward polar residues. A compositionally biased stretch (pro residues) spans 1348-1360 (STPPAPPTPPHPT).

Belongs to the protein kinase superfamily. Tyr protein kinase family. In terms of assembly, interacts with ESR1. Interacts with AP-2 complex subunit alpha. Mg(2+) is required as a cofactor. Post-translationally, autophosphorylated. In terms of tissue distribution, expressed in brain. Predominantly expressed in cerebral cortex, thalamus, the cerebellum and hippocampal formation (at protein level).

The protein localises to the membrane. It is found in the cell projection. Its subcellular location is the axon. The protein resides in the dendrite. It localises to the golgi apparatus membrane. It carries out the reaction L-seryl-[protein] + ATP = O-phospho-L-seryl-[protein] + ADP + H(+). It catalyses the reaction L-threonyl-[protein] + ATP = O-phospho-L-threonyl-[protein] + ADP + H(+). Protein kinase which phosphorylates ESR1 (in vitro) and protects it against proteasomal degradation. May also regulate ESR1 levels indirectly via a PKC-AKT-FOXO3 pathway where it decreases the activity of PKC and the phosphorylation of AKT, thereby increasing binding of transcriptional activator FOXO3 to the ESR1 promoter and increasing ESR1 transcription. Involved in endocytic trafficking of N-methyl-D-aspartate receptors (NMDAR) in neurons. The polypeptide is Serine/threonine-protein kinase LMTK3 (Lmtk3) (Mus musculus (Mouse)).